The sequence spans 99 residues: MGNMQGMMKQMQKMQKEMQAAQRELYATEFEGKSASDMVTVKFTGEKIMKDIQIKPEAIDPDDPDMLQDLIIEAVNQAMGTIDKETQDKMGKYTRGLPM.

It belongs to the YbaB/EbfC family. In terms of assembly, homodimer.

The protein resides in the cytoplasm. Its subcellular location is the nucleoid. Binds to DNA and alters its conformation. May be involved in regulation of gene expression, nucleoid organization and DNA protection. This Lacticaseibacillus casei (strain BL23) (Lactobacillus casei) protein is Nucleoid-associated protein LCABL_24440.